The chain runs to 337 residues: MRDMEMRWAAPAPATRGRGRARRRAPDQPSFSSTLLDAICDSMDEGGEDGRTRNAASAAAKKRQEAANSYHYYYCYKPSLAASYRAAPALGSTADCPGRGYFSSSEVEYSLRRLRPIRTSAAGGAGDGAAVARKQRHEQPDVEKTAKTKPGSASARACRRPASPGARLASLLNSIFSGKRPSAQRPACSPDYPEPACSTAPPSSSSSYARRPCHAKTLRTPPTTTTTARARPSRSRTVRFLDIDGKVAVAAAVAGCRRIPVMEVEADTDDGGEESSDASSDLFELDSLAAIAPAGGRDGSHGDELPVYGTTGVGIRRDIGRRRPYGHAPCRSWSRAV.

Disordered stretches follow at residues 1-32 (MRDMEMRWAAPAPATRGRGRARRRAPDQPSFS), 120-163 (SAAG…RPAS), and 179-233 (KRPS…ARPS). Residues 137-146 (HEQPDVEKTA) show a composition bias toward basic and acidic residues. Composition is skewed to low complexity over residues 150–163 (PGSASARACRRPAS), 195–209 (PACSTAPPSSSSSYA), and 219–230 (RTPPTTTTTARA).

Belongs to the BIG GRAIN 1 (BG1) plant protein family.

Its subcellular location is the cell membrane. Involved in auxin transport. Regulator of the auxin signaling pathway. This Oryza sativa subsp. indica (Rice) protein is Protein BIG GRAIN 1-like.